We begin with the raw amino-acid sequence, 299 residues long: DNA repair protein RecO (299 aa).

The tract at residues 1–62 (MTLNSDADPD…GRRAPRTPAS (62 aa)) is disordered. Positions 25–41 (ASKPARSTRKSSSAKSA) are enriched in low complexity.

Belongs to the RecO family.

In terms of biological role, involved in DNA repair and RecF pathway recombination. This chain is DNA repair protein RecO, found in Paraburkholderia xenovorans (strain LB400).